The following is a 206-amino-acid chain: Probable N-acetyltransferase 14 (206 aa).

The N-acetyltransferase domain maps to L6–L206. Residues F57–V77 form a helical membrane-spanning segment.

This sequence belongs to the camello family.

It localises to the membrane. Functionally, probable acetyltransferase that binds the 5'-GGACTACAG-3' sequence of coproporphyrinogen oxidase promoter. Able to activate transcription of a reporter construct in vitro. Probable acetyltransferase. Its function is as follows. May act as a transcription factor regulating the expression of coproporphyrinogen oxidase by binding to a promoter regulatory element. In Mus musculus (Mouse), this protein is Probable N-acetyltransferase 14 (Nat14).